We begin with the raw amino-acid sequence, 246 residues long: Trypsin-5 (246 aa).

The signal sequence occupies residues methionine 1 to alanine 15. The propeptide at phenylalanine 16–lysine 23 is activation peptide. Residues isoleucine 24–alanine 244 enclose the Peptidase S1 domain. A disulfide bridge links cysteine 48 with cysteine 64. Catalysis depends on charge relay system residues histidine 63 and aspartate 107. 3 cysteine pairs are disulfide-bonded: cysteine 139-cysteine 206, cysteine 171-cysteine 185, and cysteine 196-cysteine 220. Serine 200 functions as the Charge relay system in the catalytic mechanism.

Belongs to the peptidase S1 family. In terms of processing, proteolytically cleaved and activated by an autocatalytic mechanism. Cleavage by CTRC inhibits autoactivation. Expressed in the heart, lung, brain, kidney, liver, epididymis, ovary and uterus. Expression in the testis is limited to round and elongating spermatids.

Its subcellular location is the cytoplasmic vesicle. It localises to the secretory vesicle. It is found in the acrosome. The enzyme catalyses Preferential cleavage: Arg-|-Xaa, Lys-|-Xaa.. With respect to regulation, activated by autocatalytic cleavage. Cleavage by CTRC inhibits autoactivation. Serine protease capable of autoactivation. This Mus musculus (Mouse) protein is Trypsin-5.